Reading from the N-terminus, the 150-residue chain is MKVVVQRVKEASVTNDTLNNQIKKGYCLLVGIGQDSTEQDADVIAKKIANARLFEDDNNKLNFNIQQVNGEILSVSQFTLYADVKKGNRPGFSNSKNPDQAVKIYEYFNDALRAYGLTVKTGEFGTHMNVNINNDGPVTIIYESQDGKIQ.

The Gly-cisPro motif, important for rejection of L-amino acids motif lies at 136–137; sequence GP.

Belongs to the DTD family. As to quaternary structure, homodimer.

It localises to the cytoplasm. The enzyme catalyses glycyl-tRNA(Ala) + H2O = tRNA(Ala) + glycine + H(+). It carries out the reaction a D-aminoacyl-tRNA + H2O = a tRNA + a D-alpha-amino acid + H(+). Functionally, an aminoacyl-tRNA editing enzyme that deacylates mischarged D-aminoacyl-tRNAs. Also deacylates mischarged glycyl-tRNA(Ala), protecting cells against glycine mischarging by AlaRS. Acts via tRNA-based rather than protein-based catalysis; rejects L-amino acids rather than detecting D-amino acids in the active site. By recycling D-aminoacyl-tRNA to D-amino acids and free tRNA molecules, this enzyme counteracts the toxicity associated with the formation of D-aminoacyl-tRNA entities in vivo and helps enforce protein L-homochirality. The polypeptide is D-aminoacyl-tRNA deacylase (Staphylococcus aureus (strain bovine RF122 / ET3-1)).